The primary structure comprises 117 residues: Large ribosomal subunit protein bL19 (117 aa).

The protein belongs to the bacterial ribosomal protein bL19 family.

Its function is as follows. This protein is located at the 30S-50S ribosomal subunit interface and may play a role in the structure and function of the aminoacyl-tRNA binding site. In Bacteroides fragilis (strain ATCC 25285 / DSM 2151 / CCUG 4856 / JCM 11019 / LMG 10263 / NCTC 9343 / Onslow / VPI 2553 / EN-2), this protein is Large ribosomal subunit protein bL19.